A 250-amino-acid chain; its full sequence is Probable S-methyl-5'-thioinosine phosphorylase (250 aa).

Phosphate contacts are provided by residues T14 and 56 to 57; that span reads RH. Residue M189 coordinates substrate. T190 is a phosphate binding site. 213–215 serves as a coordination point for substrate; it reads NWA.

It belongs to the PNP/MTAP phosphorylase family. MTAP subfamily. In terms of assembly, homotrimer.

It catalyses the reaction S-methyl-5'-thioinosine + phosphate = 5-(methylsulfanyl)-alpha-D-ribose 1-phosphate + hypoxanthine. It participates in purine metabolism; purine nucleoside salvage. Catalyzes the reversible phosphorylation of S-methyl-5'-thioinosine (MTI) to hypoxanthine and 5-methylthioribose-1-phosphate. Involved in the breakdown of S-methyl-5'-thioadenosine (MTA), a major by-product of polyamine biosynthesis. Catabolism of (MTA) occurs via deamination to MTI and phosphorolysis to hypoxanthine. The chain is Probable S-methyl-5'-thioinosine phosphorylase from Xanthomonas campestris pv. campestris (strain ATCC 33913 / DSM 3586 / NCPPB 528 / LMG 568 / P 25).